The primary structure comprises 92 residues: Putative regulatory protein Tpet_0986 (92 aa).

It belongs to the RemA family.

The polypeptide is Putative regulatory protein Tpet_0986 (Thermotoga petrophila (strain ATCC BAA-488 / DSM 13995 / JCM 10881 / RKU-1)).